The following is a 288-amino-acid chain: NAD kinase (288 aa).

The active-site Proton acceptor is the D73. NAD(+) contacts are provided by residues 73–74, R78, 144–145, D174, 185–190, and A209; these read DG, NE, and TAYSLS.

This sequence belongs to the NAD kinase family. It depends on a divalent metal cation as a cofactor.

Its subcellular location is the cytoplasm. The catalysed reaction is NAD(+) + ATP = ADP + NADP(+) + H(+). Functionally, involved in the regulation of the intracellular balance of NAD and NADP, and is a key enzyme in the biosynthesis of NADP. Catalyzes specifically the phosphorylation on 2'-hydroxyl of the adenosine moiety of NAD to yield NADP. The polypeptide is NAD kinase (Porphyromonas gingivalis (strain ATCC 33277 / DSM 20709 / CIP 103683 / JCM 12257 / NCTC 11834 / 2561)).